The chain runs to 298 residues: L-xylulose reductase (298 aa).

NADP(+)-binding residues include isoleucine 19, aspartate 68, and asparagine 103. Active-site proton donor residues include serine 161, serine 162, and tyrosine 175. The NADP(+) site is built by tyrosine 175, lysine 179, and valine 207. Lysine 179 serves as the catalytic Lowers pKa of active site Tyr.

Belongs to the short-chain dehydrogenases/reductases (SDR) family.

The enzyme catalyses xylitol + NADP(+) = L-xylulose + NADPH + H(+). Its pathway is carbohydrate degradation; L-arabinose degradation via L-arabinitol; D-xylulose 5-phosphate from L-arabinose (fungal route): step 3/5. L-xylulose reductase involved in the catabolism of L-arabinose through an oxidoreductive pathway. Catalyzes the NADPH-dependent reduction of L-xylulose. The polypeptide is L-xylulose reductase (Aspergillus niger (strain ATCC 1015 / CBS 113.46 / FGSC A1144 / LSHB Ac4 / NCTC 3858a / NRRL 328 / USDA 3528.7)).